The primary structure comprises 249 residues: Large ribosomal subunit protein uL30A (249 aa).

Belongs to the universal ribosomal protein uL30 family. As to quaternary structure, component of the small ribosomal subunit (SSU). Mature yeast ribosomes consist of a small (40S) and a large (60S) subunit. The 40S small subunit contains 1 molecule of ribosomal RNA (18S rRNA) and at least 33 different proteins. The large 60S subunit contains 3 rRNA molecules (25S, 5.8S and 5S rRNA) and at least 46 different proteins.

It is found in the cytoplasm. The protein resides in the nucleus. It localises to the nucleolus. Its function is as follows. Component of the ribosome, a large ribonucleoprotein complex responsible for the synthesis of proteins in the cell. The small ribosomal subunit (SSU) binds messenger RNAs (mRNAs) and translates the encoded message by selecting cognate aminoacyl-transfer RNA (tRNA) molecules. The large subunit (LSU) contains the ribosomal catalytic site termed the peptidyl transferase center (PTC), which catalyzes the formation of peptide bonds, thereby polymerizing the amino acids delivered by tRNAs into a polypeptide chain. The nascent polypeptides leave the ribosome through a tunnel in the LSU and interact with protein factors that function in enzymatic processing, targeting, and the membrane insertion of nascent chains at the exit of the ribosomal tunnel. This Schizosaccharomyces pombe (strain 972 / ATCC 24843) (Fission yeast) protein is Large ribosomal subunit protein uL30A (rlp7).